A 384-amino-acid chain; its full sequence is Flap endonuclease 1 (384 aa).

The interval 1–108 (MGIHKLMDLL…GELARRQKAK (108 aa)) is N-domain. Asp-34 lines the Mg(2+) pocket. Arg-74 is a DNA binding site. 5 residues coordinate Mg(2+): Asp-90, Glu-162, Glu-164, Asp-183, and Asp-185. The segment at 126–254 (EALKQEQRNL…VNAFKLITEH (129 aa)) is I-domain. Glu-162 is a binding site for DNA. Gly-232 and Asp-234 together coordinate DNA. Asp-234 serves as a coordination point for Mg(2+). Residues 340 to 384 (AKEHKGSQTRLNDFFKVQPKDTSSTSKASKKPTNTKSANKKGGKK) form a disordered region. The interval 346 to 354 (SQTRLNDFF) is interaction with PCNA. Low complexity predominate over residues 359 to 376 (KDTSSTSKASKKPTNTKS).

Belongs to the XPG/RAD2 endonuclease family. FEN1 subfamily. As to quaternary structure, interacts with PCNA. Three molecules of FEN1 bind to one PCNA trimer with each molecule binding to one PCNA monomer. PCNA stimulates the nuclease activity without altering cleavage specificity. Requires Mg(2+) as cofactor. In terms of processing, phosphorylated. Phosphorylation upon DNA damage induces relocalization to the nuclear plasma.

The protein localises to the nucleus. Its subcellular location is the nucleolus. It localises to the nucleoplasm. It is found in the mitochondrion. In terms of biological role, structure-specific nuclease with 5'-flap endonuclease and 5'-3' exonuclease activities involved in DNA replication and repair. During DNA replication, cleaves the 5'-overhanging flap structure that is generated by displacement synthesis when DNA polymerase encounters the 5'-end of a downstream Okazaki fragment. It enters the flap from the 5'-end and then tracks to cleave the flap base, leaving a nick for ligation. Also involved in the long patch base excision repair (LP-BER) pathway, by cleaving within the apurinic/apyrimidinic (AP) site-terminated flap. Acts as a genome stabilization factor that prevents flaps from equilibrating into structures that lead to duplications and deletions. Also possesses 5'-3' exonuclease activity on nicked or gapped double-stranded DNA, and exhibits RNase H activity. Also involved in replication and repair of rDNA and in repairing mitochondrial DNA. This is Flap endonuclease 1 from Tetrahymena thermophila (strain SB210).